A 206-amino-acid polypeptide reads, in one-letter code: KVNYCKIKCLKGGVHTACKYGTSTKPNCGKMVVKAYGLTEAEKQEILKVHNDFRQKVAKGLETRGNPGPQPPAKNMNNLVWNDELANIAQVWASQCNYGHDTCKDTEKYPVGQNIAKRSTTAALFDSPGKLVKMWENEVKDFNPNIEWSKNNLKKTGHYTQMVWAKTKEIGCGSVKYVKDEWYTHYLVCNYGPSGNFRNEKLYEKK.

4 cysteine pairs are disulfide-bonded: cysteine 5-cysteine 18, cysteine 9-cysteine 103, cysteine 28-cysteine 96, and cysteine 172-cysteine 189. The SCP domain maps to 47–191 (LKVHNDFRQK…WYTHYLVCNY (145 aa)).

This sequence belongs to the CRISP family. Venom allergen 5-like subfamily. Expressed by the venom gland.

The protein resides in the secreted. The sequence is that of Venom allergen 5 from Vespula vidua (Ground hornet).